Reading from the N-terminus, the 815-residue chain is Cell division control protein 48 homolog D (815 aa).

Ala-2 bears the N-acetylalanine mark. Ser-42 is modified (phosphoserine). Residues 249-256 and 522-529 each bind ATP; these read GPPGSGKT and GPPGCGKT. Ser-720 is modified (phosphoserine). The interval 772–815 is disordered; the sequence is GSEFRFPDAPTGTTGAFPGAAATVGGVDPFATSGGAADDDDLYS. The span at 780–798 shows a compositional bias: low complexity; the sequence is APTGTTGAFPGAAATVGGV.

This sequence belongs to the AAA ATPase family.

The protein resides in the nucleus. It is found in the cytoplasm. It localises to the cytoskeleton. The protein localises to the phragmoplast. In terms of biological role, probably functions in cell division and growth processes. Interacts with certain SNAREs as part of specialized membrane fusion events where vesicles from the same organelle fuse (homotypic fusion). In Arabidopsis thaliana (Mouse-ear cress), this protein is Cell division control protein 48 homolog D (CDC48D).